A 349-amino-acid polypeptide reads, in one-letter code: Ribosomal RNA small subunit methyltransferase H (349 aa).

Residues 34 to 36 (GGH), aspartate 54, phenylalanine 81, aspartate 102, and glutamine 109 each bind S-adenosyl-L-methionine. The disordered stretch occupies residues 328–349 (SRTGSVQHGQAKHKGVVQRGGS).

This sequence belongs to the methyltransferase superfamily. RsmH family.

It localises to the cytoplasm. It catalyses the reaction cytidine(1402) in 16S rRNA + S-adenosyl-L-methionine = N(4)-methylcytidine(1402) in 16S rRNA + S-adenosyl-L-homocysteine + H(+). In terms of biological role, specifically methylates the N4 position of cytidine in position 1402 (C1402) of 16S rRNA. This is Ribosomal RNA small subunit methyltransferase H from Dehalococcoides mccartyi (strain ATCC BAA-2100 / JCM 16839 / KCTC 5957 / BAV1).